The sequence spans 263 residues: tRNA pseudouridine synthase A (263 aa).

Asp-73 acts as the Nucleophile in catalysis. Tyr-131 serves as a coordination point for substrate.

It belongs to the tRNA pseudouridine synthase TruA family. Homodimer.

It catalyses the reaction uridine(38/39/40) in tRNA = pseudouridine(38/39/40) in tRNA. In terms of biological role, formation of pseudouridine at positions 38, 39 and 40 in the anticodon stem and loop of transfer RNAs. This Mycoplasmoides gallisepticum (strain R(low / passage 15 / clone 2)) (Mycoplasma gallisepticum) protein is tRNA pseudouridine synthase A.